The primary structure comprises 261 residues: Small ribosomal subunit protein eS1 (261 aa).

Residues 1–18 show a composition bias toward basic residues; that stretch reads MAVGKNKRISKGKKGGKK. The tract at residues 1–21 is disordered; the sequence is MAVGKNKRISKGKKGGKKKAT.

The protein belongs to the eukaryotic ribosomal protein eS1 family. Component of the small ribosomal subunit. Mature ribosomes consist of a small (40S) and a large (60S) subunit. The 40S subunit contains about 33 different proteins and 1 molecule of RNA (18S). The 60S subunit contains about 49 different proteins and 3 molecules of RNA (25S, 5.8S and 5S).

The protein localises to the cytoplasm. This Daucus carota (Wild carrot) protein is Small ribosomal subunit protein eS1 (cyc07).